Here is a 207-residue protein sequence, read N- to C-terminus: Small ribosomal subunit protein uS10m (207 aa).

The N-terminal 14 residues, 1-14 (MNMFRQAVRSFVRY), are a transit peptide targeting the mitochondrion.

The protein belongs to the universal ribosomal protein uS10 family. Part of the mitochondrial small ribosomal subunit.

Its subcellular location is the mitochondrion. Involved in mitochondrial genome encoded proteins translation. Involved in the binding of tRNA to the ribosomes. In Kluyveromyces lactis (strain ATCC 8585 / CBS 2359 / DSM 70799 / NBRC 1267 / NRRL Y-1140 / WM37) (Yeast), this protein is Small ribosomal subunit protein uS10m (RSM10).